The following is a 1563-amino-acid chain: MAEPISNPTRINILGKDNIIIDHGIWLNFVAQDLLQNIKSSTYILITDTNLYKTYVPPFQSVFEKAAPQDVRLLTYAIPPGEYSKGRDTKAEIEDWMLSHQCTRDTVIIALGGGVIGDMIGYVAATFMRGVRFVQCPTTLLAMVDSSIGGKTAIDVPMGKNLIGAFWQPERIYIDLTFLNTLPVREFINGMAEVIKTAAIWDENEFTALEENAKAILEAVRSKNKSADRLAPIRDILKRIVLGSARVKAEVVSSDEREGGLRNLLNFGHSIGHAYEAILTPQVLHGEAVAIGMVKEAELARFLGVLRPSAVARLSKCIASYDLPTSLQDKRIVKLTAGKECPVDVLLQKMAVDKKNEGRKKKIVLLSAIGKTYEPKASVVEDRAIRIVLSPCIRVFAGVPKDLNVSVTPPGSKSISNRALILAALGEGTTRIHNLLHSDDTQVMLNAVAQLQGASFSWEEGDVLVVKGNGGKLQATSTPLYLGNAGTASRFLTSVAALCNPSDVNSTVLTGNARMKQRPIGALVDALRANGVGVKYLEKEHSLPVQVDAAGGLAGGVMELAATISSQYVSSLLMAAPYAREPVTLRLVGGKPISQPYIDMTIAMMASFGVQVQRSAEDPNTYYIPQGTYKNPETYVVESDASSATYPLAIAAITGTTCTVPNIGSKSLQGDARFAIEVLRPMGCTVEQTDVSTTVTGPPIGTLKAIPHVDMEPMTDAFLTASVLAAVASGTTQITGIANQRVKECNRILAMKDQLAKFGVHCNELEDGIEVIGIPYTELKNPTEGIYCYDDHRVAMSFSVLSTISPHPVLILERECTGKTWPGWWDTMSNYFKVHLEGEEEPHSSHVSHEKPRKGNPKSIFIIGMRGAGKSTAGKWMSEVLNRPLIDLDHELERREGQTIPEIIRSERGWEGFRKAELELLEDVIKNNPTGHIFSCGGGIVETEAARKMLLSYSQNGGIVLLVHRDTDQVVEYLMRDKSRPAYSENIREVYYRRKPFFEECSNFRYYSPHPDGSKALTEPPFDFSQFLSVICGHSNHLEEVKKKPHSFFVSLTVPNVSKALDIIPKVVVGSDAVELRVDLLEDYDPEFVAKQVALLRSAARIPIVYTVRTVSQGGKFPDDDYELALKLYRTGLQAGVEYLDLEMTMPDEVIEAVTNEKGYTHIIASHHDPKATLSWKNGGWIQYYNKALQHGDVVKLVGVARELADNFALARFKASLAAAHDKPLIALNMGAAGKLSRVLNGFLTPVSHPALPSKAAPGQLSAAEIRQALALIGELEPRSFHLFGNPISASRSPALHNALFRDNGLPHQYSLFETDNAADVKDLIRAPGFGGASVTIPLKLDIMPLLDEVSDAAKVIGAVNTIIPVRNGDKVTLRGDNTDWMGMVYALRNAGVVKCTKESPTAGMVVGAGGTTRAAVHALHDLGFAPIYVVARNADRVKALAESFPAEYDIRSLSTPEEVAAESTAQPSVVISTIPADKPIDQSMREVIVASLRHPSVADGKHVLLEMAYTPRHTPLMQLAEDAHWQTIPGLEVLAAQGWYQFQLWTGITPIYTDAQAAVMGN.

Positions 1–382 (MAEPISNPTR…YEPKASVVED (382 aa)) are 3-dehydroquinate synthase. NAD(+)-binding positions include 48–50 (DTN), 82–85 (EYSK), 113–115 (GGV), and Asp118. Arg129 is a binding site for 7-phospho-2-dehydro-3-deoxy-D-arabino-heptonate. 138–139 (TT) contributes to the NAD(+) binding site. Asp145 and Lys151 together coordinate 7-phospho-2-dehydro-3-deoxy-D-arabino-heptonate. Lys160 serves as a coordination point for NAD(+). Asn161 is a binding site for 7-phospho-2-dehydro-3-deoxy-D-arabino-heptonate. Residues 178–181 (FLNT) and Asn189 contribute to the NAD(+) site. Glu193 contributes to the Zn(2+) binding site. 7-phospho-2-dehydro-3-deoxy-D-arabino-heptonate contacts are provided by residues 193 to 196 (EVIK) and Lys248. Glu258 functions as the Proton acceptor; for 3-dehydroquinate synthase activity in the catalytic mechanism. 7-phospho-2-dehydro-3-deoxy-D-arabino-heptonate-binding positions include 262 to 266 (RNLLN) and His269. His269 contributes to the Zn(2+) binding site. The active-site Proton acceptor; for 3-dehydroquinate synthase activity is the His273. 2 residues coordinate 7-phospho-2-dehydro-3-deoxy-D-arabino-heptonate: His285 and Lys354. His285 is a binding site for Zn(2+). The tract at residues 395 to 834 (VFAGVPKDLN…WDTMSNYFKV (440 aa)) is EPSP synthase. The active-site For EPSP synthase activity is Cys816. A shikimate kinase region spans residues 857 to 1051 (PKSIFIIGMR…KKKPHSFFVS (195 aa)). 864–871 (GMRGAGKS) contacts ATP. The segment at 1052 to 1265 (LTVPNVSKAL…AAPGQLSAAE (214 aa)) is 3-dehydroquinase. The active-site Proton acceptor; for 3-dehydroquinate dehydratase activity is His1168. Lys1196 functions as the Schiff-base intermediate with substrate; for 3-dehydroquinate dehydratase activity in the catalytic mechanism. Residues 1278–1563 (PRSFHLFGNP…TDAQAAVMGN (286 aa)) form a shikimate dehydrogenase region.

This sequence in the N-terminal section; belongs to the sugar phosphate cyclases superfamily. Dehydroquinate synthase family. It in the 2nd section; belongs to the EPSP synthase family. The protein in the 3rd section; belongs to the shikimate kinase family. In the 4th section; belongs to the type-I 3-dehydroquinase family. This sequence in the C-terminal section; belongs to the shikimate dehydrogenase family. Homodimer. Requires Zn(2+) as cofactor.

It is found in the cytoplasm. It catalyses the reaction 7-phospho-2-dehydro-3-deoxy-D-arabino-heptonate = 3-dehydroquinate + phosphate. The enzyme catalyses 3-dehydroquinate = 3-dehydroshikimate + H2O. The catalysed reaction is shikimate + NADP(+) = 3-dehydroshikimate + NADPH + H(+). It carries out the reaction shikimate + ATP = 3-phosphoshikimate + ADP + H(+). It catalyses the reaction 3-phosphoshikimate + phosphoenolpyruvate = 5-O-(1-carboxyvinyl)-3-phosphoshikimate + phosphate. The protein operates within metabolic intermediate biosynthesis; chorismate biosynthesis; chorismate from D-erythrose 4-phosphate and phosphoenolpyruvate: step 2/7. Its pathway is metabolic intermediate biosynthesis; chorismate biosynthesis; chorismate from D-erythrose 4-phosphate and phosphoenolpyruvate: step 3/7. It participates in metabolic intermediate biosynthesis; chorismate biosynthesis; chorismate from D-erythrose 4-phosphate and phosphoenolpyruvate: step 4/7. It functions in the pathway metabolic intermediate biosynthesis; chorismate biosynthesis; chorismate from D-erythrose 4-phosphate and phosphoenolpyruvate: step 5/7. The protein operates within metabolic intermediate biosynthesis; chorismate biosynthesis; chorismate from D-erythrose 4-phosphate and phosphoenolpyruvate: step 6/7. In terms of biological role, the AROM polypeptide catalyzes 5 consecutive enzymatic reactions in prechorismate polyaromatic amino acid biosynthesis. The polypeptide is Pentafunctional AROM polypeptide (Neurospora crassa (strain ATCC 24698 / 74-OR23-1A / CBS 708.71 / DSM 1257 / FGSC 987)).